Consider the following 597-residue polypeptide: Alpha-1,2-mannosyltransferase MNN2 (597 aa).

The Cytoplasmic portion of the chain corresponds to 1–6; the sequence is MIAKQK. The chain crosses the membrane as a helical span at residues 7-27; sequence IKILIGVIIVIATYHFIVSSN. Over 28-597 the chain is Extracellular; that stretch reads VRSKDLSDLV…ETAEIPTVVS (570 aa). The tract at residues 39 to 89 is disordered; the sequence is LGSSDKSTTENERPKNNIVTNNRLDNPPNEDIPHAEPDSPPQEPPKSGNKP. A glycan (N-linked (GlcNAc...) asparagine) is linked at Asn382.

It belongs to the MNN1/MNT family. Mn(2+) is required as a cofactor.

The protein resides in the golgi apparatus membrane. Its pathway is protein modification; protein glycosylation. Enzyme activity is regulated by iron. Functionally, alpha-1,2-mannosyltransferase required for cell wall integrity. Responsible for addition of the first alpha-1,2-linked mannose to form the branches on the mannan backbone of oligosaccharides. Addition of alpha-1,2-mannose is required for stabilization of the alpha-1,6-mannose backbone and hence regulates mannan fibril length; and is important for both immune recognition and virulence. Promotes iron uptake and usage along the endocytosis pathway under iron-limiting conditions. The protein is Alpha-1,2-mannosyltransferase MNN2 (MNN2) of Candida albicans (strain SC5314 / ATCC MYA-2876) (Yeast).